The following is a 124-amino-acid chain: S-adenosylmethionine decarboxylase proenzyme (124 aa).

S63 acts as the Schiff-base intermediate with substrate; via pyruvic acid in catalysis. At S63 the chain carries Pyruvic acid (Ser); by autocatalysis. The active-site Proton acceptor; for processing activity is H68. Catalysis depends on C83, which acts as the Proton donor; for catalytic activity.

It belongs to the prokaryotic AdoMetDC family. Type 1 subfamily. Heterotetramer of two alpha and two beta chains arranged as a dimer of alpha/beta heterodimers. The cofactor is pyruvate. Is synthesized initially as an inactive proenzyme. Formation of the active enzyme involves a self-maturation process in which the active site pyruvoyl group is generated from an internal serine residue via an autocatalytic post-translational modification. Two non-identical subunits are generated from the proenzyme in this reaction, and the pyruvate is formed at the N-terminus of the alpha chain, which is derived from the carboxyl end of the proenzyme. The post-translation cleavage follows an unusual pathway, termed non-hydrolytic serinolysis, in which the side chain hydroxyl group of the serine supplies its oxygen atom to form the C-terminus of the beta chain, while the remainder of the serine residue undergoes an oxidative deamination to produce ammonia and the pyruvoyl group blocking the N-terminus of the alpha chain.

It catalyses the reaction S-adenosyl-L-methionine + H(+) = S-adenosyl 3-(methylsulfanyl)propylamine + CO2. It functions in the pathway amine and polyamine biosynthesis; S-adenosylmethioninamine biosynthesis; S-adenosylmethioninamine from S-adenosyl-L-methionine: step 1/1. Catalyzes the decarboxylation of S-adenosylmethionine to S-adenosylmethioninamine (dcAdoMet), the propylamine donor required for the synthesis of the polyamines spermine and spermidine from the diamine putrescine. The sequence is that of S-adenosylmethionine decarboxylase proenzyme from Anoxybacillus flavithermus (strain DSM 21510 / WK1).